The sequence spans 83 residues: Small ribosomal subunit protein bS16 (83 aa).

Belongs to the bacterial ribosomal protein bS16 family.

This Borrelia duttonii (strain Ly) protein is Small ribosomal subunit protein bS16.